Reading from the N-terminus, the 124-residue chain is S-adenosylmethionine decarboxylase proenzyme (124 aa).

Ser63 (schiff-base intermediate with substrate; via pyruvic acid) is an active-site residue. Ser63 carries the post-translational modification Pyruvic acid (Ser); by autocatalysis. The active-site Proton acceptor; for processing activity is the His68. The Proton donor; for catalytic activity role is filled by Cys83.

This sequence belongs to the prokaryotic AdoMetDC family. Type 1 subfamily. In terms of assembly, heterotetramer of two alpha and two beta chains arranged as a dimer of alpha/beta heterodimers. Pyruvate is required as a cofactor. Is synthesized initially as an inactive proenzyme. Formation of the active enzyme involves a self-maturation process in which the active site pyruvoyl group is generated from an internal serine residue via an autocatalytic post-translational modification. Two non-identical subunits are generated from the proenzyme in this reaction, and the pyruvate is formed at the N-terminus of the alpha chain, which is derived from the carboxyl end of the proenzyme. The post-translation cleavage follows an unusual pathway, termed non-hydrolytic serinolysis, in which the side chain hydroxyl group of the serine supplies its oxygen atom to form the C-terminus of the beta chain, while the remainder of the serine residue undergoes an oxidative deamination to produce ammonia and the pyruvoyl group blocking the N-terminus of the alpha chain.

The enzyme catalyses S-adenosyl-L-methionine + H(+) = S-adenosyl 3-(methylsulfanyl)propylamine + CO2. It functions in the pathway amine and polyamine biosynthesis; S-adenosylmethioninamine biosynthesis; S-adenosylmethioninamine from S-adenosyl-L-methionine: step 1/1. Functionally, catalyzes the decarboxylation of S-adenosylmethionine to S-adenosylmethioninamine (dcAdoMet), the propylamine donor required for the synthesis of the polyamines spermine and spermidine from the diamine putrescine. This is S-adenosylmethionine decarboxylase proenzyme from Geobacillus sp. (strain WCH70).